The primary structure comprises 308 residues: Olfactory receptor OR9H1 (308 aa).

Over 1 to 26 the chain is Extracellular; it reads MVNFTHVSEFVLLGFQGGPGMQAMLF. A helical membrane pass occupies residues 27-47; that stretch reads LIFLILYGIAVVGNLGMIVII. The Cytoplasmic portion of the chain corresponds to 48–58; the sequence is WVDAHLHTPMY. Residues 59–81 form a helical membrane-spanning segment; it reads AFLQSLSLLDICYSSTIAPRALA. Residues 82–95 lie on the Extracellular side of the membrane; that stretch reads NSMQEDHTISFGGC. A disulfide bridge links Cys95 with Cys177. The helical transmembrane segment at 96 to 116 threads the bilayer; the sequence is AAQFFFLSLFGITEAFLLAAM. Residues 117 to 137 lie on the Cytoplasmic side of the membrane; sequence AYDRFIAICNPLLYSVSMSHQ. Residues 138 to 158 traverse the membrane as a helical segment; sequence VCVLLISGSYLWGVVNAIAQT. The Extracellular segment spans residues 159–203; it reads TMTFRLPFCGSNEINDFFCDVPPLLSLSCSDTFINQLVLLGLCGS. A helical transmembrane segment spans residues 204–224; it reads IIVSTFLIVLVSYIYIISTIL. Residues 225–245 lie on the Cytoplasmic side of the membrane; sequence RIPTMQGCQKAFSTCASHLTG. A helical membrane pass occupies residues 246 to 266; the sequence is VCLFFGTVFFMYAQPSAIFFM. Topologically, residues 267-269 are extracellular; that stretch reads EQS. A helical membrane pass occupies residues 270 to 290; the sequence is KIVSIFYTMVIPMLNPLIYSL. Topologically, residues 291 to 308 are cytoplasmic; it reads RNKEVKQALRRSMQKLSL.

Belongs to the G-protein coupled receptor 1 family.

It localises to the cell membrane. Odorant receptor. This chain is Olfactory receptor OR9H1, found in Homo sapiens (Human).